Reading from the N-terminus, the 287-residue chain is T-cell ecto-ADP-ribosyltransferase 1 (287 aa).

The N-terminal stretch at 1–20 (MPSNNFKFFLTWWLTQQVTG) is a signal peptide. Disulfide bonds link Cys-41–Cys-246, Cys-80–Cys-201, and Cys-141–Cys-193. The TR mART core domain occupies 61-241 (EELKLEWEKA…ISLDSPKRKK (181 aa)). The NAD(+) site is built by Tyr-98 and Arg-146. Active-site residues include Arg-146 and Ser-167. Asn-171 carries an N-linked (GlcNAc...) asparagine glycan. Position 202 (Ser-202) interacts with NAD(+). Glu-209 is a catalytic residue. An N-linked (GlcNAc...) asparagine glycan is attached at Asn-256. A lipid anchor (GPI-anchor amidated serine) is attached at Ser-258. Positions 259 to 287 (SLGSRESCVSLFLVVLLGLLVQQLTLAEP) are cleaved as a propeptide — removed in mature form.

It belongs to the Arg-specific ADP-ribosyltransferase family. Post-translationally, it is proposed that in the absence of reducing agents, a disulfide bond is formed between Cys-80 and Cys-201, leading to a conformational change that reduces the catalytic rate of NAD glycohydrolysis. In terms of tissue distribution, expressed in spleen, intestine and thymus.

It localises to the cell membrane. It carries out the reaction L-arginyl-[protein] + NAD(+) = N(omega)-(ADP-D-ribosyl)-L-arginyl-[protein] + nicotinamide + H(+). It catalyses the reaction NAD(+) + H2O = ADP-D-ribose + nicotinamide + H(+). Its function is as follows. Has both ADP-ribosyltransferase activity and thiol-dependent NAD(+) glycohydrolase activity. In Mus musculus (Mouse), this protein is T-cell ecto-ADP-ribosyltransferase 1 (Art2a).